The following is a 227-amino-acid chain: Probable septum site-determining protein MinC (227 aa).

It belongs to the MinC family. Interacts with MinD and FtsZ.

In terms of biological role, cell division inhibitor that blocks the formation of polar Z ring septums. Rapidly oscillates between the poles of the cell to destabilize FtsZ filaments that have formed before they mature into polar Z rings. Prevents FtsZ polymerization. The sequence is that of Probable septum site-determining protein MinC from Clostridioides difficile (strain 630) (Peptoclostridium difficile).